The primary structure comprises 192 residues: Peptidyl-tRNA hydrolase (192 aa).

Residue tyrosine 14 coordinates tRNA. Histidine 19 (proton acceptor) is an active-site residue. TRNA-binding residues include tyrosine 64, asparagine 66, and asparagine 112.

This sequence belongs to the PTH family. In terms of assembly, monomer.

The protein resides in the cytoplasm. It carries out the reaction an N-acyl-L-alpha-aminoacyl-tRNA + H2O = an N-acyl-L-amino acid + a tRNA + H(+). Hydrolyzes ribosome-free peptidyl-tRNAs (with 1 or more amino acids incorporated), which drop off the ribosome during protein synthesis, or as a result of ribosome stalling. Its function is as follows. Catalyzes the release of premature peptidyl moieties from peptidyl-tRNA molecules trapped in stalled 50S ribosomal subunits, and thus maintains levels of free tRNAs and 50S ribosomes. This chain is Peptidyl-tRNA hydrolase, found in Anaeromyxobacter dehalogenans (strain 2CP-C).